Here is a 201-residue protein sequence, read N- to C-terminus: Pro-P-factor (201 aa).

The N-terminal stretch at 1-20 (MKITAVIALLFSLAAASPIP) is a signal peptide. 5 propeptides span residues 21–31 (VADPGVVSVSK), 58–65 (EFEAAPAK), 92–99 (EFEAAPEK), 126–133 (EFEAAPAK), and 160–201 (TEED…KFES). N-linked (GlcNAc...) asparagine glycosylation is found at asparagine 187 and asparagine 194.

In terms of processing, proteolytically cleaved by kpr, probably at the C-terminal side of dibasic Lys-Arg residues. Post-translationally, glycosylated. Most of the precursor molecules are glycosylated on at least one site, but only a small proportion are glycosylated on both sites.

It localises to the secreted. Functionally, in h- cells under nutritional starvation, P-factor induces alteration of cell morphology toward mating, arrest of the cell cycle at the G1 phase prior to the initiation of DNA synthesis and indirect transcriptional activation of the sxa2 gene which down-regulates the signaling pathway. This is Pro-P-factor (map2) from Schizosaccharomyces pombe (strain 972 / ATCC 24843) (Fission yeast).